The chain runs to 72 residues: Beta-defensin 104 (72 aa).

An N-terminal signal peptide occupies residues 1 to 22 (MQRLVLLLAISLLLYQDLPVRS). Intrachain disulfides connect Cys-30/Cys-57, Cys-37/Cys-51, and Cys-41/Cys-58.

Belongs to the beta-defensin family. As to expression, high expression in the testis. Gastric antrum exhibited relatively high levels. A lower expression is observed in uterus and neutrophils thyroid gland, lung, and kidney. No detectable expression in other tissues tested.

It localises to the secreted. In terms of biological role, has antimicrobial activity. Synergistic effects with lysozyme and DEFB103. This Homo sapiens (Human) protein is Beta-defensin 104 (DEFB104A).